We begin with the raw amino-acid sequence, 218 residues long: Interleukin-37 (218 aa).

Positions 1-40 (MSFVGENSGVKMGSEDWEKDEPQCCLEDPAGSPLEPGPSL) are disordered. Residues 1–45 (MSFVGENSGVKMGSEDWEKDEPQCCLEDPAGSPLEPGPSLPTMNF) constitute a propeptide, removed in mature form. The span at 13 to 22 (GSEDWEKDEP) shows a compositional bias: basic and acidic residues.

The protein belongs to the IL-1 family. In terms of assembly, interacts with SMAD3. Binds IL18R1, but not to IL1R1, with lower affinity than IL18, and does not seem to act as a receptor antagonist for IL18. Interacts with cargo receptor TMED10; the interaction mediates the translocation from the cytoplasm into the ERGIC (endoplasmic reticulum-Golgi intermediate compartment) and thereby secretion. Proteolytically converted to the mature form by CASP1. In general, low constitutive expression, if any, in healthy tissues; high expression in inflammatory counterparts, including in synovial tissues from individuals with active rheumatoid arthritis. Isoform A, isoform B and isoform C are expressed in testis, colon, placenta, lung and lymph node. Isoform D and isoform E were found only in testis and bone marrow. Whereas only isoform A is found in brain, only isoform B in kidney and only isoform C in heart.

The protein resides in the cytoplasm. It localises to the cytosol. Its subcellular location is the nucleus. It is found in the secreted. Its function is as follows. Immune regulatory cytokine that acts as a suppressor of innate inflammatory and immune responses involved in curbing excessive inflammation. Signaling can occur via two mechanisms, intracellularly through nuclear translocation with SMAD3 and extracellularly after secretion and binding to its receptor composed of IL18R1 and IL18RAP. Suppresses, or reduces, pro-inflammatory cytokine production, including IL1A and IL6, as well as CCL12, CSF1, CSF2, CXCL13, IL1B, IL23A and IL1RN, but spares anti-inflammatory cytokines. Inhibits dendritic cell activation. The protein is Interleukin-37 of Homo sapiens (Human).